The following is a 332-amino-acid chain: uncharacterized protein (332 aa).

The protein belongs to the bacterial solute-binding protein 1 family. WtpA subfamily.

This is an uncharacterized protein from Methanococcus maripaludis (strain DSM 14266 / JCM 13030 / NBRC 101832 / S2 / LL).